The chain runs to 219 residues: Membrin-12 (219 aa).

Alanine 2 is modified (N-acetylalanine). Residues 2-197 (ASGTVGGLSE…LIERRNRVDT (196 aa)) lie on the Cytoplasmic side of the membrane. Residues 198–215 (WIKYAGMIATLVILYLFI) form a helical; Anchor for type IV membrane protein membrane-spanning segment. The Vesicular segment spans residues 216-219 (RWTR).

The protein belongs to the GOSR2 family.

It is found in the golgi apparatus membrane. Its function is as follows. Involved in transport of proteins from the cis/medial-Golgi to the trans-Golgi network. This chain is Membrin-12 (MEMB12), found in Arabidopsis thaliana (Mouse-ear cress).